The chain runs to 607 residues: MTESDRHDTPKGDRRISEGAGASPDESNPTDFAPEEFTPAYTPPLARSGTERPSFGRPAADNKELQERVDNLTARNAKLLDTLKDARQQLVALREEVDRLGQPPSGYGVLLEVQPDATVDVFTSGRKMRLTCSPNIDTETLHKGQTLRLNEALTIVEACEFDTVGEISTLREVLGDGKRALVVGHADEERVVHLAEPLLGEVDGEDGKRRRLRPGDSLLIDTKAGFAFERVPKAEVEDLVLEEVPDVGYEDIGGLGRQIEQIRDAVELPFLHKDLFRDYALRPPKGVLLYGPPGCGKTLIAKAVANSLAKKIAQARGDDAKEAKSYFLNIKGPELLNKFVGETERHIRLIFQRAREKASEGTPVIVFFDEMDSIFRTRGSGVSSDVETTVVPQLLSEIDGVEGLENVIVIGASNREDMIDPAILRPGRLDVKIKIERPDAEAAMDIFSKYLVETLPVHADDLNEFGGDRTACINAMIERVVERMYAESDDNRFLEVTYANGDKEIMYFKDFNSGAMIQNVVDRSKKYAIKSQLETGAPGLRVQHLFDSILDEFAENEDLPNTTNPDDWARISGKKGERIVYIRTLVTGKSSGASRAIDTETNTGQYL.

A compositionally biased stretch (basic and acidic residues) spans 1–17 (MTESDRHDTPKGDRRIS). Positions 1-65 (MTESDRHDTP…GRPAADNKEL (65 aa)) are disordered. Positions 59 to 102 (AADNKELQERVDNLTARNAKLLDTLKDARQQLVALREEVDRLGQ) form a coiled coil. An ATP-binding site is contributed by 294 to 299 (GCGKTL). The tract at residues 606–607 (YL) is docks into pockets in the proteasome alpha-ring.

The protein belongs to the AAA ATPase family. Homohexamer. Assembles into a hexameric ring structure that caps the 20S proteasome core. Strongly interacts with the prokaryotic ubiquitin-like protein Pup through a hydrophobic interface; the interacting region of ARC lies in its N-terminal coiled-coil domain. There is one Pup binding site per ARC hexamer ring. Upon ATP-binding, the C-terminus of ARC interacts with the alpha-rings of the proteasome core, possibly by binding to the intersubunit pockets.

It functions in the pathway protein degradation; proteasomal Pup-dependent pathway. ATPase which is responsible for recognizing, binding, unfolding and translocation of pupylated proteins into the bacterial 20S proteasome core particle. May be essential for opening the gate of the 20S proteasome via an interaction with its C-terminus, thereby allowing substrate entry and access to the site of proteolysis. Thus, the C-termini of the proteasomal ATPase may function like a 'key in a lock' to induce gate opening and therefore regulate proteolysis. This Gordonia bronchialis (strain ATCC 25592 / DSM 43247 / BCRC 13721 / JCM 3198 / KCTC 3076 / NBRC 16047 / NCTC 10667) (Rhodococcus bronchialis) protein is Proteasome-associated ATPase.